The following is a 518-amino-acid chain: Arginyl-tRNA--protein transferase 1 (518 aa).

Serine 169 bears the Phosphoserine mark. The segment at 175–203 (EKLGSGEPSHSVKVHTVPKPGKGADLSKP) is disordered.

This sequence belongs to the R-transferase family. In terms of assembly, monomer. Interacts with LIAT1; LIAT1 is not a substrate of ATE1, the interaction takes place in the cytoplasm and seems to increase ATE1 arginyltransferase activity.

It is found in the nucleus. It localises to the cytoplasm. It catalyses the reaction an N-terminal L-alpha-aminoacyl-[protein] + L-arginyl-tRNA(Arg) = an N-terminal L-arginyl-L-aminoacyl-[protein] + tRNA(Arg) + H(+). Its function is as follows. Involved in the post-translational conjugation of arginine to the N-terminal aspartate or glutamate of a protein. This arginylation is required for degradation of the protein via the ubiquitin pathway. Does not arginylate cysteine residues. This is Arginyl-tRNA--protein transferase 1 from Homo sapiens (Human).